Reading from the N-terminus, the 699-residue chain is MRAIQKKSLCHTSIISCWRRREYSIPPQANFGETFLNEKSSRSHQILRLTVESSAREFLGKDKSTTLVASANFVDLAGSERASQALSAGTRLKEGCHINRSLLALGTVIRKLSMGSNAHIPYRDSKLTRILQPSLGGNARTAIICTLSPATSHIEQSRNTLLFGSCAKEVVTNAQVNVVMSDKALVKHLQKELARLESELRHPVQSSSLETLLKEKDNQIRKMEKEIKELKSQRDLAQSRLQDLLQSVGDHDLNRQVQGKHSVRSPPSVGMPPSVSRDDSSQVSHDDSDLYKEVRCIESNRTGGNDQLDLSAGESSSPQDSNMNSGLHGNDSNASVNSRHSRPSGEAPITLEEHLENIRRPFVSLAKDLGSSTRNSSNLRVIGRSRSCRSLTGSTMFDDMEMDDCTPLNRSLVEFPGRPVESHRRGSALHYDAETDTLSRAGSMSSEISTFKDAKTNGSVACDTEFTGIGEFVAELKEMAQVHYQKQLGDQNANGKSIGLDPIEGVSQSPSRWPLEFEKKQQEIIELWQACSISLVHRTYFFLLFKGEAADSIYMEVELRRLSFLRDTYSRGSTPSNAIVGSLSTSPVASAKKLQREREMLARQMQKRLSTEEREHTYTKWGVSLDSKRRKLQVARRLWTETKDLEHVRESASLVAKLIGLQEPGQVLKEMFGLSFAPQQQPTRRRSSNGWRYGIPSFA.

The region spanning 1–170 (MRAIQKKSLC…LLFGSCAKEV (170 aa)) is the Kinesin motor domain. A coiled-coil region spans residues 179-247 (VMSDKALVKH…QSRLQDLLQS (69 aa)). The segment at 249 to 345 (GDHDLNRQVQ…VNSRHSRPSG (97 aa)) is disordered. Positions 264-275 (RSPPSVGMPPSV) are enriched in low complexity. Positions 276–298 (SRDDSSQVSHDDSDLYKEVRCIE) are enriched in basic and acidic residues. A compositionally biased stretch (polar residues) spans 313–338 (GESSSPQDSNMNSGLHGNDSNASVNS).

It belongs to the TRAFAC class myosin-kinesin ATPase superfamily. Kinesin family. KIN-7 subfamily.

In Oryza sativa subsp. japonica (Rice), this protein is Putative inactive kinesin-like protein KIN-7B.